A 208-amino-acid chain; its full sequence is Small ribosomal subunit protein eS1 (208 aa).

The protein belongs to the eukaryotic ribosomal protein eS1 family.

This chain is Small ribosomal subunit protein eS1, found in Saccharolobus islandicus (strain Y.N.15.51 / Yellowstone #2) (Sulfolobus islandicus).